A 390-amino-acid chain; its full sequence is Chorismate synthase (390 aa).

Residues Arg-48 and Arg-54 each coordinate NADP(+). Residues Arg-125–Ser-127, Asn-238–Ala-239, Gly-278, Lys-293–Ser-297, and Arg-319 contribute to the FMN site. The tract at residues Lys-360 to Ser-390 is disordered. Positions Ile-366–Pro-376 are enriched in polar residues.

It belongs to the chorismate synthase family. Homotetramer. The cofactor is FMNH2.

It carries out the reaction 5-O-(1-carboxyvinyl)-3-phosphoshikimate = chorismate + phosphate. It functions in the pathway metabolic intermediate biosynthesis; chorismate biosynthesis; chorismate from D-erythrose 4-phosphate and phosphoenolpyruvate: step 7/7. Its function is as follows. Catalyzes the anti-1,4-elimination of the C-3 phosphate and the C-6 proR hydrogen from 5-enolpyruvylshikimate-3-phosphate (EPSP) to yield chorismate, which is the branch point compound that serves as the starting substrate for the three terminal pathways of aromatic amino acid biosynthesis. This reaction introduces a second double bond into the aromatic ring system. In Nitrosomonas eutropha (strain DSM 101675 / C91 / Nm57), this protein is Chorismate synthase.